Consider the following 1720-residue polypeptide: DNA-directed RNA polymerase I subunit RPA1 (1720 aa).

6 residues coordinate Zn(2+): Cys64, Cys67, Cys74, His77, Cys104, and Cys107. The tract at residues 110-201 is clamp; that stretch reads LTCPRAVIHL…IALFWKAHMN (92 aa). The Zn(2+) site is built by Cys205 and Cys208. Position 240 is a phosphoserine (Ser240). The interval 320 to 426 is clamp; that stretch reads FTNGQTVNLQ…IRQILEKKEG (107 aa). The segment at 403–416 is rudder; the sequence is DSEMDKLMMDKYPG. DNA-binding residues include Lys424, Arg429, and Arg436. The involved in RRN3 binding to Pol I complex stretch occupies residues 468–542; it reads YPQPVTPWNV…QGTKIVCRHV (75 aa). An RNA-binding site is contributed by Arg552. Residues Asp588, Asp590, and Asp592 each contribute to the Mg(2+) site. Asp592 contributes to the RNA binding site. A funnel region spans residues 805-883; the sequence is KPKADVKRQR…NEINKACMPF (79 aa). The bridging helix stretch occupies residues 960-1001; that stretch reads KPPEFFFHCMAGREGLVDTAVKTSRSGYLQRCIIKHLEGLVV. A mediates the interaction with TOP2A region spans residues 1060–1155; that stretch reads ADPKKALHHF…SLSVWRPDIY (96 aa). The trigger loop stretch occupies residues 1207-1248; sequence PGEAVGLLAAQSIGEPSTQMTLNTFHFAGRGEMNVTLGIPRL. Arg1249 lines the DNA pocket. The tract at residues 1365-1498 is disordered; that stretch reads RNVNTRRATQ…SQEPQGPEAM (134 aa). Residues 1373 to 1390 are compositionally biased toward basic and acidic residues; that stretch reads TQRDLDNAGELGRSRGEQ. Residue Ser1386 is modified to Phosphoserine. Composition is skewed to acidic residues over residues 1391 to 1412 and 1422 to 1446; these read EGDEEEEGHIVDAEAEEGDADA and EEEVDYESEEEEEREGEENDDEDMQ. The span at 1447–1461 shows a compositional bias: basic and acidic residues; that stretch reads EERNPHREGARKTQE. Positions 1462-1474 are enriched in acidic residues; it reads QDEEVGLGTEEDP.

Belongs to the RNA polymerase beta' chain family. As to quaternary structure, component of the RNA polymerase I (Pol I) complex consisting of 13 subunits: a ten-subunit catalytic core composed of POLR1A/RPA1, POLR1B/RPA2, POLR1C/RPAC1, POLR1D/RPAC2, POLR1H/RPA12, POLR2E/RPABC1, POLR2F/RPABC2, POLR2H/RPABC3, POLR2K/RPABC4 and POLR2L/RPABC5; a mobile stalk subunit POLR1F/RPA43 protruding from the core and additional subunits homologous to general transcription factors POLR1E/RPA49 and POLR1G/RPA34. Part of Pol I pre-initiation complex (PIC), in which Pol I core assembles with RRN3 and promoter-bound UTBF and SL1/TIF-IB complex. Interacts (via dock II domain) with TOP2A; this interaction may assist Pol I transcription initiation by releasing supercoils occurring during DNA unwinding. Interacts with CAVIN1; this interaction induces the dissociation of Pol I complex paused at rDNA terminator sequences. Interacts with MYO1C. Interacts with ERBB2. Interacts with DDX11. Interacts with RECQL5. Mg(2+) is required as a cofactor.

The protein resides in the nucleus. It is found in the nucleolus. Its subcellular location is the chromosome. It catalyses the reaction RNA(n) + a ribonucleoside 5'-triphosphate = RNA(n+1) + diphosphate. Catalytic core component of RNA polymerase I (Pol I), a DNA-dependent RNA polymerase which synthesizes ribosomal RNA precursors using the four ribonucleoside triphosphates as substrates. Transcribes 47S pre-rRNAs from multicopy rRNA gene clusters, giving rise to 5.8S, 18S and 28S ribosomal RNAs. Pol I-mediated transcription cycle proceeds through transcription initiation, transcription elongation and transcription termination stages. During transcription initiation, Pol I pre-initiation complex (PIC) is recruited by the selectivity factor 1 (SL1/TIF-IB) complex bound to the core promoter that precedes an rDNA repeat unit. The PIC assembly bends the promoter favoring the formation of the transcription bubble and promoter escape. Once the polymerase has escaped from the promoter it enters the elongation phase during which RNA is actively polymerized, based on complementarity with the template DNA strand. Highly processive, assembles in structures referred to as 'Miller trees' where many elongating Pol I complexes queue and transcribe the same rDNA coding regions. At terminator sequences downstream of the rDNA gene, PTRF interacts with Pol I and halts Pol I transcription leading to the release of the RNA transcript and polymerase from the DNA. Forms Pol I active center together with the second largest subunit POLR1B/RPA2. Appends one nucleotide at a time to the 3' end of the nascent RNA, with POLR1A/RPA1 contributing a Mg(2+)-coordinating DxDGD motif, and POLR1B/RPA2 participating in the coordination of a second Mg(2+) ion and providing lysine residues believed to facilitate Watson-Crick base pairing between the incoming nucleotide and the template base. Typically, Mg(2+) ions direct a 5' nucleoside triphosphate to form a phosphodiester bond with the 3' hydroxyl of the preceding nucleotide of the nascent RNA, with the elimination of pyrophosphate. Has proofreading activity: Pauses and backtracks to allow the cleavage of a missincorporated nucleotide via POLR1H/RPA12. High Pol I processivity is associated with decreased transcription fidelity. The polypeptide is DNA-directed RNA polymerase I subunit RPA1 (Homo sapiens (Human)).